A 400-amino-acid polypeptide reads, in one-letter code: MNFLLCIFKGVYVIKLIQRFFKLESAGGILLLFSAVVAMLLANSPLSNQYNDFLNLPVSLQIGSFSINKTLIHWINDGFMAVFFVLVGMEVKKELFEGALSTYQQAIFPAIAAIGGMVIPAVVYWFIAKQDPSLANGWAIPMATDIAFALGIMALLSKQVPLPLKIFLLALAIIDDLGAIVVIALFFSHGLSVQALIFSAVAIIALILLNRFKVSALCAYMVVGAILWASVLKSGVHATLAGVIIGFSIPLKGKKGERPLDDFEHILASWSSFVILPLFAFANAGVSFAGIDVNMISSPLLLAIASGLIIGKPVGIFGFSYISVKLGLAKLPDGINFKQIFAVAVLCGIGFTMSMFLASLAFDANAGESVNTLSRLGILFGSTVSAILGYLFLKQTTKLS.

Helical transmembrane passes span 26 to 46 (AGGI…NSPL), 71 to 91 (LIHW…GMEV), 107 to 127 (IFPA…YWFI), 137 to 157 (GWAI…ALLS), 166 to 186 (IFLL…IALF), 189 to 209 (HGLS…LILL), 212 to 232 (FKVS…ASVL), 233 to 253 (KSGV…PLKG), 273 to 293 (FVIL…GIDV), 299 to 319 (PLLL…IFGF), 340 to 360 (IFAV…LASL), and 373 to 393 (LSRL…YLFL).

Belongs to the NhaA Na(+)/H(+) (TC 2.A.33) antiporter family.

It is found in the cell inner membrane. It carries out the reaction Na(+)(in) + 2 H(+)(out) = Na(+)(out) + 2 H(+)(in). Na(+)/H(+) antiporter that extrudes sodium in exchange for external protons. The protein is Na(+)/H(+) antiporter NhaA of Haemophilus influenzae (strain PittEE).